Reading from the N-terminus, the 316-residue chain is Pantothenate kinase (316 aa).

95 to 102 (GSVAVGKS) is a binding site for ATP.

This sequence belongs to the prokaryotic pantothenate kinase family.

The protein localises to the cytoplasm. It catalyses the reaction (R)-pantothenate + ATP = (R)-4'-phosphopantothenate + ADP + H(+). It participates in cofactor biosynthesis; coenzyme A biosynthesis; CoA from (R)-pantothenate: step 1/5. This is Pantothenate kinase from Salmonella agona (strain SL483).